Consider the following 153-residue polypeptide: Small ribosomal subunit protein uS5c (153 aa).

The 64-residue stretch at 11–74 folds into the S5 DRBM domain; sequence WQERVIQIRR…VDAKKQLINI (64 aa).

This sequence belongs to the universal ribosomal protein uS5 family. In terms of assembly, part of the 30S ribosomal subunit. Contacts protein S4.

It localises to the plastid. Its subcellular location is the chloroplast. In terms of biological role, with S4 and S12 plays an important role in translational accuracy. This Cyanidioschyzon merolae (strain NIES-3377 / 10D) (Unicellular red alga) protein is Small ribosomal subunit protein uS5c (rps5).